The chain runs to 477 residues: uncharacterized protein (477 aa).

A helical membrane pass occupies residues 107–129; sequence VNFWSLSMACASVLALLGLVYLI.

Its subcellular location is the membrane. This is an uncharacterized protein from Treponema pallidum (strain Nichols).